The primary structure comprises 358 residues: Putative hydrogenase expression/formation protein MJ0993 (358 aa).

C33, C61, and C64 together coordinate Fe cation.

This sequence belongs to the HypD family.

The polypeptide is Putative hydrogenase expression/formation protein MJ0993 (Methanocaldococcus jannaschii (strain ATCC 43067 / DSM 2661 / JAL-1 / JCM 10045 / NBRC 100440) (Methanococcus jannaschii)).